The following is a 357-amino-acid chain: D-alanine--D-alanine ligase (357 aa).

Positions 134-339 (KQLFEHRGLP…YPDLIAKLID (206 aa)) constitute an ATP-grasp domain. Residue 167–222 (NDKLTYPVFVKPANLGSSVGISKCNNEEELKSGIAEAFQFDRKLVIEQGINAREIE) coordinates ATP. The Mg(2+) site is built by Asp-293, Glu-306, and Asn-308.

The protein belongs to the D-alanine--D-alanine ligase family. Requires Mg(2+) as cofactor. Mn(2+) is required as a cofactor.

Its subcellular location is the cytoplasm. The catalysed reaction is 2 D-alanine + ATP = D-alanyl-D-alanine + ADP + phosphate + H(+). The protein operates within cell wall biogenesis; peptidoglycan biosynthesis. In terms of biological role, cell wall formation. The protein is D-alanine--D-alanine ligase of Staphylococcus epidermidis (strain ATCC 35984 / DSM 28319 / BCRC 17069 / CCUG 31568 / BM 3577 / RP62A).